We begin with the raw amino-acid sequence, 500 residues long: LEM protein 2 (500 aa).

The 45-residue stretch at 1–45 folds into the LEM domain; sequence MVDVEKMSDAELRAELNVRGANVGPVTGTTRSLYEKKLKKLLSGG. Residues 1–325 are Nuclear-facing; that stretch reads MVDVEKMSDA…VKQTNIFNEA (325 aa). A disordered region spans residues 39 to 202; sequence KKLLSGGAKT…RRITSVPGLI (164 aa). Low complexity predominate over residues 46–57; sequence AKTPARPTVAKP. Residues 58-75 are compositionally biased toward pro residues; sequence APKPTPKSAPAPKSPKSP. The span at 77–89 shows a compositional bias: low complexity; that stretch reads ARRSIPRAAATAA. Residues 103–122 are compositionally biased toward acidic residues; it reads EEMSDSDDDMRDDDDDDEEI. 2 stretches are compositionally biased toward low complexity: residues 130–141 and 168–197; these read SSFRSANSTASS and NTPRTTSSSSKTTINTTTTRIPSTPRRITS. A helical membrane pass occupies residues 326–346; that stretch reads IYFALYVILILFVVLGIAYAL. Residues 347-378 lie on the Perinuclear space side of the membrane; it reads TTTHRPKTADFSGYWGVLKAAGRDSLNFFYNY. A helical membrane pass occupies residues 379 to 399; the sequence is AILPVVSLGIFVVLGAGIYFG. At 400–500 the chain is on the nuclear side; the sequence is HRKYKEAKEQ…WIGNQSQKRW (101 aa).

In terms of assembly, interacts with lmn-1. Interacts (via LEM domain and the C-terminal nuclear domain) with baf-1. In terms of tissue distribution, ubiquitous. High expression in germline and intestine.

It is found in the nucleus inner membrane. It localises to the nucleus envelope. The protein resides in the chromosome. Nuclear lamina-associated inner nuclear membrane protein that is involved in cell division, nuclear structure organization, maintenance of nuclear envelope integrity and nuclear envelope reformation after mitosis. In interphase cells, plays a role in anchoring and spatial arrangement of chromosome arms at the nuclear periphery, forming so-called lem-2 subdomains. Both arms of autosomes but only the left arm of the X chromosome are anchored in lem-2 subdomains; sequences bound by lem-2 are mainly repetitive chromosome sequences and inactive genes. Involved in chromosome segregation and cell division, probably via its interaction with the nuclear intermediate filament protein lmn-1, the main component of nuclear lamina. Required to organize the distribution of lmn-1, nuclear pore complexes (NPCs) and chromatin in mitotically active cells. Involved in the nuclear positioning and efficient anchoring of microtubule-organizing centers (MTOCs) to the nuclear envelope during mitosis as well as on maintaining correct nuclear morphology. Contributes to closure of nuclear envelope (NE) holes and prevents excess nuclear membranes after meiosis and mitosis. Together with emr-1, plays a role in baf-1 enrichment at the nuclear envelope in anaphase. Together with emr-1, involved in muscle cell attachment to hypodermal cells, as well as muscle cell location and sarcomere organization. May play a role in radiation-induced DNA damage repair response. In Caenorhabditis elegans, this protein is LEM protein 2 (lem-2).